A 415-amino-acid chain; its full sequence is Fructose-1,6-bisphosphatase, chloroplastic (415 aa).

The N-terminal 57 residues, 1-57 (MASIGPATTTAVKLRSSIFNPQSSTLSPSQQCITFTKSLHSFPTATRHNVASGVRCM), are a transit peptide targeting the chloroplast. The Mg(2+) site is built by glutamate 135, glutamate 164, aspartate 185, leucine 187, and aspartate 188. 188-191 (DGSS) serves as a coordination point for substrate. Residues 207 to 232 (SPNDECIVDSDHDDESQLSAEEQRCV) are involved in light regulation. A disulfide bond links cysteine 231 and cysteine 236. Residues asparagine 295, tyrosine 327, tyrosine 345, tyrosine 347, and lysine 357 each coordinate substrate. Position 363 (glutamate 363) interacts with Mg(2+).

Belongs to the FBPase class 1 family. As to quaternary structure, homotetramer. Mg(2+) serves as cofactor.

The protein resides in the plastid. It localises to the chloroplast. The enzyme catalyses beta-D-fructose 1,6-bisphosphate + H2O = beta-D-fructose 6-phosphate + phosphate. It participates in carbohydrate biosynthesis; Calvin cycle. This chain is Fructose-1,6-bisphosphatase, chloroplastic, found in Spinacia oleracea (Spinach).